A 433-amino-acid chain; its full sequence is Monodehydroascorbate reductase (433 aa).

Residues 13–16, glutamate 40, arginine 47, lysine 52, isoleucine 95, and 146–147 each bind FAD; these read GGVS and RE. NAD(+) contacts are provided by residues 171–177, glutamate 195, arginine 201, and glycine 260; that span reads GGYIGLE. An NADP(+)-binding site is contributed by 173 to 177; the sequence is YIGLE. Residues arginine 201 and glycine 260 each contribute to the NADP(+) site. An FAD-binding site is contributed by aspartate 297. 313 to 314 is an NAD(+) binding site; that stretch reads EH. Residue 313–314 coordinates NADP(+); that stretch reads EH. Residue valine 315 coordinates FAD. Arginine 319 serves as a coordination point for L-ascorbate. Tyrosine 348 lines the FAD pocket. Tyrosine 348 provides a ligand contact to NAD(+). Tyrosine 348 lines the NADP(+) pocket. L-ascorbate is bound at residue arginine 350.

It belongs to the FAD-dependent oxidoreductase family. The cofactor is FAD. As to expression, expressed in leaves, and to a lesser degree in stems, roots and all stages of fruit.

Its subcellular location is the cytoplasm. The enzyme catalyses 2 monodehydro-L-ascorbate radical + NADH + H(+) = 2 L-ascorbate + NAD(+). In terms of biological role, catalyzes the conversion of monodehydroascorbate to ascorbate, oxidizing NADH in the process. This is Monodehydroascorbate reductase from Solanum lycopersicum (Tomato).